The chain runs to 261 residues: UPF0177 protein YvdC (261 aa).

6 helical membrane passes run 15–35 (WVIV…IFHL), 43–63 (VLSI…VLFI), 84–104 (LDTV…YLIA), 123–143 (IIIG…FAQI), 197–217 (YFAF…TDLY), and 239–259 (FYLN…IALV).

Belongs to the UPF0177 family.

The protein resides in the cell membrane. This Lactococcus lactis subsp. lactis (strain IL1403) (Streptococcus lactis) protein is UPF0177 protein YvdC (yvdC).